The following is a 502-amino-acid chain: Mitochondrial fusion and transport protein UGO1 (502 aa).

At Met-1 the chain carries N-acetylmethionine. The Cytoplasmic segment spans residues 1-293; it reads MNNNNVTEAT…VINSPDISKS (293 aa). The interval 1 to 294 is binds FZO1; that stretch reads MNNNNVTEAT…INSPDISKSF (294 aa). A Solcar repeat occupies 288–383; sequence PDISKSFILA…NSFFNKLFDL (96 aa). A helical; Signal-anchor for type II membrane protein membrane pass occupies residues 294 to 314; that stretch reads FILALGAGVFTSIILLPVDLI. A binds MGM1 region spans residues 312 to 502; sequence DLIRTRLIVT…VDINMEQEKF (191 aa). Topologically, residues 315-502 are mitochondrial intermembrane; that stretch reads RTRLIVTSFK…VDINMEQEKF (188 aa).

In terms of assembly, interacts with FZO1 through its cytoplasmic domain and with MGM1 through its mitochondrial intermembrane space domain.

It is found in the mitochondrion outer membrane. Its function is as follows. Required for mitochondrial fusion as well as normal mitochondrial morphology by bridging the essential interaction between FZO1 and MGM1. May coordinate fusion of inner and outer membranes during mitochondrial fusion. This Saccharomyces cerevisiae (strain ATCC 204508 / S288c) (Baker's yeast) protein is Mitochondrial fusion and transport protein UGO1.